Consider the following 258-residue polypeptide: uncharacterized protein (258 aa).

The N-terminal stretch at 1 to 19 (MRKIFLPLLLVALSPVAHS) is a signal peptide.

This is an uncharacterized protein from Escherichia coli (strain K12).